The chain runs to 258 residues: Cruciform cutting endonuclease 1, mitochondrial (258 aa).

The 35-residue stretch at 1–35 (MATVKLSFLQHICKLTGLSRSGRKDELLRRIVDSP) folds into the SAP domain. Positions 46 and 230 each coordinate Mg(2+).

In terms of assembly, homodimer.

The protein resides in the mitochondrion. The catalysed reaction is Endonucleolytic cleavage at a junction such as a reciprocal single-stranded crossover between two homologous DNA duplexes (Holliday junction).. Capable of resolving Holliday junctions. Specific for 4-way junctions. Seems to be important for the maintenance of mitochondrial DNA. Cleaves fixed junctions at the point of strand exchange. Cleaves after 5'-CT-3' and 5'-TT-3' sequences. This Schizosaccharomyces pombe (strain 972 / ATCC 24843) (Fission yeast) protein is Cruciform cutting endonuclease 1, mitochondrial (cce1).